Here is a 224-residue protein sequence, read N- to C-terminus: Putative MgpC-like protein MPN_150 (224 aa).

The protein belongs to the MgpC family.

This chain is Putative MgpC-like protein MPN_150, found in Mycoplasma pneumoniae (strain ATCC 29342 / M129 / Subtype 1) (Mycoplasmoides pneumoniae).